The following is a 186-amino-acid chain: TATA box-binding protein-like 1 (186 aa).

The protein belongs to the TBP family. As to expression, expressed ubiquitously with highest expression in the ovary and testis.

It is found in the cytoplasm. The protein localises to the nucleus. Part of a specialized transcription system that mediates the transcription of most ribosomal proteins through the 5'-TCT-3' motif which is a core promoter element at these genes. Seems to also mediate the transcription of NF1. Does not bind the TATA box. Members of the TBP family are differentially required to regulate transcription and development during early embryogenesis. Particularly regulates genes that have a role in catabolism. The sequence is that of TATA box-binding protein-like 1 (tbpl1) from Xenopus laevis (African clawed frog).